Reading from the N-terminus, the 487-residue chain is Calcium-binding tyrosine phosphorylation-regulated protein (487 aa).

Residues 12–49 (YGLKTLLEGISRAVLKTNPSDINQFAAAYFQELTMYRG) enclose the RIIa domain. Composition is skewed to basic and acidic residues over residues 78–91 (KKLE…KTSV) and 101–117 (KSTD…EYSD). Disordered stretches follow at residues 78–163 (KKLE…AVSP), 243–271 (VDLG…QEPP), and 420–487 (IVSD…ATAE). Positions 140–152 (SSSKPATPKATTP) are enriched in low complexity. Polar residues-rich tracts occupy residues 420–436 (IVSD…NSVP) and 455–464 (SGTSVKSSSG). Residues 478–487 (IEPEGEATAE) are compositionally biased toward acidic residues.

In terms of assembly, interacts with FSCB. In terms of processing, phosphorylated on tyrosine residues during in vitro capacitation. Dephosphorylation affects its ability to bind calcium.

It localises to the cytoplasm. The protein localises to the cytoskeleton. The protein resides in the cell projection. It is found in the cilium. Its subcellular location is the flagellum. May function as a regulator of both motility- and head-associated functions such as capacitation and the acrosome reaction. May bind calcium in vitro. In Macaca fascicularis (Crab-eating macaque), this protein is Calcium-binding tyrosine phosphorylation-regulated protein (CABYR).